Consider the following 531-residue polypeptide: CCA tRNA nucleotidyltransferase, mitochondrial (531 aa).

This sequence belongs to the tRNA nucleotidyltransferase/poly(A) polymerase family.

It localises to the mitochondrion. It is found in the cytoplasm. The protein resides in the nucleus. The catalysed reaction is a tRNA precursor + 2 CTP + ATP = a tRNA with a 3' CCA end + 3 diphosphate. Its function is as follows. Nucleotidyltransferase that catalyzes the addition and repair of the essential 3'-terminal CCA sequence in tRNAs, which is necessary for the attachment of amino acids to the 3' terminus of tRNA molecules, using CTP and ATP as substrates. tRNA 3'-terminal CCA addition is required both for tRNA processing and repair. Also involved in tRNA surveillance by mediating tandem CCA addition to generate a CCACCA at the 3' terminus of unstable tRNAs. While stable tRNAs receive only 3'-terminal CCA, unstable tRNAs are marked with CCACCA and rapidly degraded. The structural flexibility of RNA controls the choice between CCA versus CCACCA addition: following the first CCA addition cycle, nucleotide-binding to the active site triggers a clockwise screw motion, producing torque on the RNA. This ejects stable RNAs, whereas unstable RNAs are refolded while bound to the enzyme and subjected to a second CCA catalytic cycle. This is CCA tRNA nucleotidyltransferase, mitochondrial (CCA1) from Candida glabrata (strain ATCC 2001 / BCRC 20586 / JCM 3761 / NBRC 0622 / NRRL Y-65 / CBS 138) (Yeast).